The primary structure comprises 82 residues: Endocuticle structural glycoprotein ABD-5 (82 aa).

At glutamine 1 the chain carries Pyrrolidone carboxylic acid. The region spanning 18–82 (LGQYNFAYRT…ENGYQPRVQS (65 aa)) is the Chitin-binding type R&amp;R domain.

Component of the soft endocuticle of migratory locust. The sequence is that of Endocuticle structural glycoprotein ABD-5 from Locusta migratoria (Migratory locust).